We begin with the raw amino-acid sequence, 38 residues long: Large ribosomal subunit protein bL36 (38 aa).

The protein belongs to the bacterial ribosomal protein bL36 family.

The protein is Large ribosomal subunit protein bL36 of Lactobacillus acidophilus (strain ATCC 700396 / NCK56 / N2 / NCFM).